The following is a 511-amino-acid chain: Histidine ammonia-lyase (511 aa).

A cross-link (5-imidazolinone (Ala-Gly)) is located at residues 142–144; the sequence is ASG. Ser143 is modified (2,3-didehydroalanine (Ser)).

It belongs to the PAL/histidase family. Post-translationally, contains an active site 4-methylidene-imidazol-5-one (MIO), which is formed autocatalytically by cyclization and dehydration of residues Ala-Ser-Gly.

The protein localises to the cytoplasm. It catalyses the reaction L-histidine = trans-urocanate + NH4(+). It functions in the pathway amino-acid degradation; L-histidine degradation into L-glutamate; N-formimidoyl-L-glutamate from L-histidine: step 1/3. The sequence is that of Histidine ammonia-lyase from Brucella canis (strain ATCC 23365 / NCTC 10854 / RM-666).